Reading from the N-terminus, the 293-residue chain is Lysosomal amino acid transporter 1 homolog (293 aa).

The Lumenal portion of the chain corresponds to 1–37 (MVWRTLGASNFSTCPNGSVQWIWDVFGECAQDGWDEA). N-linked (GlcNAc...) asparagine glycosylation is found at Asn10 and Asn16. In terms of domain architecture, PQ-loop 1 spans 34-100 (WDEASVGLGL…LADQLPLQTY (67 aa)). Residues 38–58 (SVGLGLVSILCFAASTFPQYI) form a helical membrane-spanning segment. The Cytoplasmic segment spans residues 59-71 (KACKTGNMDQALS). A helical transmembrane segment spans residues 72 to 92 (LWFLLGWIGGDSCNLIGSFLA). The Lumenal segment spans residues 93–96 (DQLP). The chain crosses the membrane as a helical span at residues 97 to 117 (LQTYTAVYYVLADLMMLTLYF). Residues 118 to 127 (HYKFKKRPSP) are Cytoplasmic-facing. A helical membrane pass occupies residues 128–148 (LSAPINSVLLFILGTVCITPL). The Lumenal segment spans residues 149–182 (LSSTDPVAVPREGFRGRTLLSVEPGNKPFTKKEV). The chain crosses the membrane as a helical span at residues 183–203 (IGFVIGSASSLLYLLSRLPQI). The region spanning 191-243 (SSLLYLLSRLPQIRTNFIRQSTQGISYSLFALVMLGNTLYGLSVLLKNPEVGQ) is the PQ-loop 2 domain. Residues 204–214 (RTNFIRQSTQG) lie on the Cytoplasmic side of the membrane. Residues 215–235 (ISYSLFALVMLGNTLYGLSVL) form a helical membrane-spanning segment. Topologically, residues 236–254 (LKNPEVGQSEGSYLLHHLP) are lumenal. A helical membrane pass occupies residues 255–275 (WLVGSLGVLLLDTIISIQFLV). At 276–293 (YRSHETAAASEREPLLPS) the chain is on the cytoplasmic side. The Di-leucine motif signature appears at 290–291 (LL).

This sequence belongs to the laat-1 family. As to expression, ubiquitously expressed.

The protein resides in the lysosome membrane. Its function is as follows. Amino acid transporter that specifically mediates the pH-dependent export of the cationic amino acids arginine, histidine and lysine from lysosomes. The sequence is that of Lysosomal amino acid transporter 1 homolog from Mus musculus (Mouse).